We begin with the raw amino-acid sequence, 505 residues long: RNA-splicing ligase RtcB homolog (505 aa).

Mn(2+) is bound by residues aspartate 119, cysteine 122, histidine 227, and histidine 259. Asparagine 226–glutamate 230 contributes to the GMP binding site. At serine 300 the chain carries Phosphoserine. Histidine 353 contacts Mn(2+). GMP is bound by residues histidine 353 to asparagine 354, glycine 402 to methionine 405, serine 409, and histidine 428 to glycine 431. Histidine 428 acts as the GMP-histidine intermediate in catalysis. Lysine 496 participates in a covalent cross-link: Glycyl lysine isopeptide (Lys-Gly) (interchain with G-Cter in SUMO2). Lysine 504 contacts GMP.

It belongs to the RtcB family. As to quaternary structure, catalytic component of the tRNA-splicing ligase complex. It depends on Mn(2+) as a cofactor.

It localises to the nucleus. It is found in the cytoplasm. It catalyses the reaction a 3'-end 3'-phospho-ribonucleotide-RNA + a 5'-end dephospho-ribonucleoside-RNA + GTP = a ribonucleotidyl-ribonucleotide-RNA + GMP + diphosphate. It carries out the reaction a 3'-end 2',3'-cyclophospho-ribonucleotide-RNA + a 5'-end dephospho-ribonucleoside-RNA + GTP + H2O = a ribonucleotidyl-ribonucleotide-RNA + GMP + diphosphate + H(+). Its function is as follows. Catalytic subunit of the tRNA-splicing ligase complex that acts by directly joining spliced tRNA halves to mature-sized tRNAs by incorporating the precursor-derived splice junction phosphate into the mature tRNA as a canonical 3',5'-phosphodiester. May act as an RNA ligase with broad substrate specificity, and may function toward other RNAs. This chain is RNA-splicing ligase RtcB homolog, found in Macaca fascicularis (Crab-eating macaque).